Here is a 327-residue protein sequence, read N- to C-terminus: Undecaprenyl-phosphate 4-deoxy-4-formamido-L-arabinose transferase (327 aa).

2 helical membrane passes run 236–256 (LSIFGSVIALLGFAFGLLLVV) and 270–290 (VFMLFAVLFMFIGAQFVGMGL).

This sequence belongs to the glycosyltransferase 2 family.

Its subcellular location is the cell inner membrane. The catalysed reaction is UDP-4-deoxy-4-formamido-beta-L-arabinose + di-trans,octa-cis-undecaprenyl phosphate = 4-deoxy-4-formamido-alpha-L-arabinopyranosyl di-trans,octa-cis-undecaprenyl phosphate + UDP. It functions in the pathway glycolipid biosynthesis; 4-amino-4-deoxy-alpha-L-arabinose undecaprenyl phosphate biosynthesis; 4-amino-4-deoxy-alpha-L-arabinose undecaprenyl phosphate from UDP-4-deoxy-4-formamido-beta-L-arabinose and undecaprenyl phosphate: step 1/2. The protein operates within bacterial outer membrane biogenesis; lipopolysaccharide biosynthesis. Functionally, catalyzes the transfer of 4-deoxy-4-formamido-L-arabinose from UDP to undecaprenyl phosphate. The modified arabinose is attached to lipid A and is required for resistance to polymyxin and cationic antimicrobial peptides. This is Undecaprenyl-phosphate 4-deoxy-4-formamido-L-arabinose transferase from Klebsiella pneumoniae subsp. pneumoniae (strain ATCC 700721 / MGH 78578).